We begin with the raw amino-acid sequence, 255 residues long: MYKIDLNCDLGEGFGVYKMGNDEEILKYITSANIACGFHAGDPKIMHETVRLSLLNDVAIGAHPGLPDLAGFGRRNINVSPDEIYDMVVYQIGALYAFVKSEGGVMHHVKPHGTLYNMAAKNKKLARAIAEGVYNVNPEFILFGLSGSELISEGNRIGLRTASEVFADRTYQLDGSLTPRSAGNAAIITDIDKAAERVYRMIKYGLVMCEQKKDIGIKADTLCIHGDNPHSLIFVRKINKHLKDLGVYIEKIIHE.

It belongs to the LamB/PxpA family. In terms of assembly, forms a complex composed of PxpA, PxpB and PxpC.

The catalysed reaction is 5-oxo-L-proline + ATP + 2 H2O = L-glutamate + ADP + phosphate + H(+). Its function is as follows. Catalyzes the cleavage of 5-oxoproline to form L-glutamate coupled to the hydrolysis of ATP to ADP and inorganic phosphate. The protein is 5-oxoprolinase subunit A of Clostridium kluyveri (strain ATCC 8527 / DSM 555 / NBRC 12016 / NCIMB 10680 / K1).